Consider the following 216-residue polypeptide: Large ribosomal subunit protein uL1 (216 aa).

It belongs to the universal ribosomal protein uL1 family. In terms of assembly, component of the large ribosomal subunit.

It is found in the cytoplasm. Functionally, component of the large ribosomal subunit. The ribosome is a large ribonucleoprotein complex responsible for the synthesis of proteins in the cell. The chain is Large ribosomal subunit protein uL1 (rpl10a) from Danio rerio (Zebrafish).